Consider the following 145-residue polypeptide: Ribonuclease H (145 aa).

One can recognise an RNase H type-1 domain in the interval 1 to 141 (MQEVTIYSDG…ADALANRGVE (141 aa)). Aspartate 9, glutamate 47, aspartate 69, and aspartate 133 together coordinate Mg(2+).

This sequence belongs to the RNase H family. In terms of assembly, monomer. Mg(2+) serves as cofactor.

The protein localises to the cytoplasm. The catalysed reaction is Endonucleolytic cleavage to 5'-phosphomonoester.. Endonuclease that specifically degrades the RNA of RNA-DNA hybrids. The protein is Ribonuclease H of Cupriavidus necator (strain ATCC 17699 / DSM 428 / KCTC 22496 / NCIMB 10442 / H16 / Stanier 337) (Ralstonia eutropha).